We begin with the raw amino-acid sequence, 421 residues long: Protein PHLOEM UNLOADING MODULATOR (421 aa).

The next 7 helical transmembrane spans lie at 30–50, 60–80, 124–144, 158–178, 286–306, 323–343, and 397–417; these read LMPV…LFYK, IPFL…ALCV, HIIG…SVVF, YIFT…STIL, AMAW…LFVA, CIVA…IWSA, and TVFA…ALTL.

This sequence belongs to the sphingomyelin synthase family.

The protein localises to the membrane. The protein operates within sphingolipid metabolism. Its function is as follows. Catalyzes the biosynthesis of sphingolipids with very long-chain fatty acid (VLCFA). Required for the formation of plasmodesmal cytoplasmic sleeve during the transition from type I to type II plasmodesmata to modulate post-sieve elements (SE) unloading and symplastic cell-to-cell molecular trafficking at the phloem pole pericycle (PPP)-endodermis interface in roots. This is Protein PHLOEM UNLOADING MODULATOR from Arabidopsis thaliana (Mouse-ear cress).